Consider the following 307-residue polypeptide: Aspartate carbamoyltransferase catalytic subunit (307 aa).

Positions 58 and 59 each coordinate carbamoyl phosphate. Residue lysine 86 coordinates L-aspartate. Positions 108, 136, and 139 each coordinate carbamoyl phosphate. Positions 169 and 223 each coordinate L-aspartate. Carbamoyl phosphate contacts are provided by glycine 264 and proline 265.

The protein belongs to the aspartate/ornithine carbamoyltransferase superfamily. ATCase family. Heterododecamer (2C3:3R2) of six catalytic PyrB chains organized as two trimers (C3), and six regulatory PyrI chains organized as three dimers (R2).

It catalyses the reaction carbamoyl phosphate + L-aspartate = N-carbamoyl-L-aspartate + phosphate + H(+). It participates in pyrimidine metabolism; UMP biosynthesis via de novo pathway; (S)-dihydroorotate from bicarbonate: step 2/3. In terms of biological role, catalyzes the condensation of carbamoyl phosphate and aspartate to form carbamoyl aspartate and inorganic phosphate, the committed step in the de novo pyrimidine nucleotide biosynthesis pathway. The polypeptide is Aspartate carbamoyltransferase catalytic subunit (Syntrophus aciditrophicus (strain SB)).